The primary structure comprises 320 residues: Malate dehydrogenase (320 aa).

Residues Gly-10–Gly-15 and Asp-34 contribute to the NAD(+) site. Substrate-binding residues include Arg-83 and Arg-89. Residues Asn-96 and Ile-119–Asn-121 each bind NAD(+). The substrate site is built by Asn-121 and Arg-152. Catalysis depends on His-176, which acts as the Proton acceptor.

Belongs to the LDH/MDH superfamily. MDH type 3 family.

The catalysed reaction is (S)-malate + NAD(+) = oxaloacetate + NADH + H(+). Its function is as follows. Catalyzes the reversible oxidation of malate to oxaloacetate. This is Malate dehydrogenase from Allorhizobium ampelinum (strain ATCC BAA-846 / DSM 112012 / S4) (Agrobacterium vitis (strain S4)).